Reading from the N-terminus, the 574-residue chain is Septation ring formation regulator EzrA (574 aa).

Residues 1–7 (MSSGIIL) lie on the Extracellular side of the membrane. The helical transmembrane segment at 8-26 (LLVAIVLLVIIAYVVGVVI) threads the bilayer. The Cytoplasmic segment spans residues 27 to 574 (RKRNDTLIAN…YEKTQERIRF (548 aa)). Coiled coils occupy residues 104–141 (VRAKHEIDNVDSQLTIIEEDIVSIREALEVLKEQEEKN), 275–343 (LVSL…SAKY), and 473–525 (DIEA…VQKS).

This sequence belongs to the EzrA family.

It localises to the cell membrane. Negative regulator of FtsZ ring formation; modulates the frequency and position of FtsZ ring formation. Inhibits FtsZ ring formation at polar sites. Interacts either with FtsZ or with one of its binding partners to promote depolymerization. In Streptococcus agalactiae serotype III (strain NEM316), this protein is Septation ring formation regulator EzrA.